We begin with the raw amino-acid sequence, 740 residues long: Ribosomal protein S6 kinase alpha-6 (740 aa).

Residues 67 to 326 (FELLKVLGQG…VEEIKRHTFF (260 aa)) enclose the Protein kinase 1 domain. ATP-binding positions include 73 to 81 (LGQGSFGKV) and Lys-99. The active-site Proton acceptor is the Asp-192. The AGC-kinase C-terminal domain occupies 327–396 (STIDWNKLYR…VAPVSLEESK (70 aa)). Residues 420-677 (YELKEDIGVG…AEQVLKHSWI (258 aa)) enclose the Protein kinase 2 domain. ATP contacts are provided by residues 426-434 (IGVGSYSIC) and Lys-449. Asp-537 functions as the Proton acceptor in the catalytic mechanism.

The protein belongs to the protein kinase superfamily. AGC Ser/Thr protein kinase family. S6 kinase subfamily. As to quaternary structure, forms a complex with either ERK1 or ERK2 in quiescent cells. Transiently dissociates following mitogenic stimulation. Mg(2+) serves as cofactor.

The enzyme catalyses L-seryl-[protein] + ATP = O-phospho-L-seryl-[protein] + ADP + H(+). It carries out the reaction L-threonyl-[protein] + ATP = O-phospho-L-threonyl-[protein] + ADP + H(+). Its activity is regulated as follows. Activated by multiple phosphorylations on threonine and serine residues. Its function is as follows. Serine/threonine kinase that may play a role in mediating the growth-factor and stress induced activation of the transcription factor CREB. The sequence is that of Ribosomal protein S6 kinase alpha-6 (rps6ka6) from Danio rerio (Zebrafish).